We begin with the raw amino-acid sequence, 377 residues long: Succinyl-diaminopimelate desuccinylase (377 aa).

H67 contributes to the Zn(2+) binding site. D69 is a catalytic residue. D100 is a binding site for Zn(2+). E134 serves as the catalytic Proton acceptor. The Zn(2+) site is built by E135, E163, and H349.

Homodimer. Zn(2+) is required as a cofactor.

It carries out the reaction N-succinyl-(2S,6S)-2,6-diaminopimelate + H2O = (2S,6S)-2,6-diaminopimelate + succinate. It participates in amino-acid biosynthesis; L-lysine biosynthesis via DAP pathway; LL-2,6-diaminopimelate from (S)-tetrahydrodipicolinate (succinylase route): step 3/3. With respect to regulation, competitively inhibited by L,L-DAP, D,L-DAP, 2-carboxyethylphosphonic acid (CEPA) and 5-mercaptopentanoic acid (MSPA). Succinate is a poor inhibitor. Its function is as follows. Catalyzes the hydrolysis of N-succinyl-L,L-diaminopimelic acid (SDAP), forming succinate and LL-2,6-diaminopimelate (DAP), an intermediate involved in the bacterial biosynthesis of lysine and meso-diaminopimelic acid, an essential component of bacterial cell walls. It can only hydrolyze L,L-N-succinyl-diaminopimelic acid (L,L-SDAP) and is inactive toward D,L-, L,D-, and D,D-SDAP. This is Succinyl-diaminopimelate desuccinylase (dapE) from Haemophilus influenzae (strain ATCC 51907 / DSM 11121 / KW20 / Rd).